A 199-amino-acid polypeptide reads, in one-letter code: Chaperone protein TorD (199 aa).

The protein belongs to the TorD/DmsD family. TorD subfamily.

Its subcellular location is the cytoplasm. In terms of biological role, involved in the biogenesis of TorA. Acts on TorA before the insertion of the molybdenum cofactor and, as a result, probably favors a conformation of the apoenzyme that is competent for acquiring the cofactor. This Escherichia coli (strain ATCC 8739 / DSM 1576 / NBRC 3972 / NCIMB 8545 / WDCM 00012 / Crooks) protein is Chaperone protein TorD.